We begin with the raw amino-acid sequence, 171 residues long: Sec-independent protein translocase protein TatB (171 aa).

A helical transmembrane segment spans residues 1-21; it reads MFDIGFSELLLVFIIGLVVLG. Residues 117-171 are disordered; sequence KDNETAHEGVTPAAAQTQASSPEQKPETTPEPVVKPAADAEPKTAAPSPSSSDKP. Polar residues predominate over residues 130-139; it reads AAQTQASSPE.

This sequence belongs to the TatB family. As to quaternary structure, the Tat system comprises two distinct complexes: a TatABC complex, containing multiple copies of TatA, TatB and TatC subunits, and a separate TatA complex, containing only TatA subunits. Substrates initially bind to the TatABC complex, which probably triggers association of the separate TatA complex to form the active translocon.

Its subcellular location is the cell inner membrane. Its function is as follows. Part of the twin-arginine translocation (Tat) system that transports large folded proteins containing a characteristic twin-arginine motif in their signal peptide across membranes. Together with TatC, TatB is part of a receptor directly interacting with Tat signal peptides. TatB may form an oligomeric binding site that transiently accommodates folded Tat precursor proteins before their translocation. The polypeptide is Sec-independent protein translocase protein TatB (Escherichia coli O6:K15:H31 (strain 536 / UPEC)).